Consider the following 272-residue polypeptide: MTIATSTKPQINWVNTLFFLGLHIGALFAFIPSNFSWAAVGVALLLYWITGGLGITLGFHRLVTHRSFQTPKWLEYFLVLCGTLACQGGPIEWVGTHRIHHLHSDTDPDPHDSNKGFWWSHIGWLIYHSPSHADVPRFTKDIAEDPVYQFLQKYFIFIQIALGLLLLYLGGWSFVVWGVFFRIVWVYHCTWLVNSATHKFGYRTYDAGDRSTNCWWVAVLVFGEGWHNNHHAFQYSARHGLEWWEVDLTWMTVQLLQILGLATNVKLADKKQ.

2 helical membrane-spanning segments follow: residues 11 to 31 (INWVNTLFFLGLHIGALFAFI) and 39 to 59 (AVGVALLLYWITGGLGITLGF). Residues 60 to 65 (HRLVTH) carry the Histidine box-1 motif. Positions 97–101 (HRIHH) match the Histidine box-2 motif. The helical transmembrane segment at 160–180 (IALGLLLLYLGGWSFVVWGVF) threads the bilayer. The short motif at 230-234 (HHAFQ) is the Histidine box-3 element.

The protein belongs to the fatty acid desaturase type 2 family. Requires Fe(2+) as cofactor.

Its subcellular location is the membrane. The enzyme catalyses a 1-octadecanoyl 2-acyl-glycerolipid + 2 reduced [2Fe-2S]-[ferredoxin] + O2 + 2 H(+) = a 1-[(9Z)-octadecenoyl]-2-acyl-glycerolipid + 2 oxidized [2Fe-2S]-[ferredoxin] + 2 H2O. It functions in the pathway lipid metabolism; polyunsaturated fatty acid biosynthesis. Its function is as follows. Desaturase involved in fatty acid biosynthesis. Introduces a double bond at carbon 9 of stearoyl groups (18:0) attached to the sn-1 position of the glycerol moiety of membrane glycerolipids. Does not desaturate palmitic acid (16:0), palmitoleic acid (16:1) and cis-vaccenic acid (18:1). The sequence is that of sn-1 stearoyl-lipid 9-desaturase from Anabaena variabilis.